The chain runs to 842 residues: Glycogen phosphorylase, muscle form (842 aa).

An N-acetylserine modification is found at S2. A Phosphoserine; by PHK; in form phosphorylase A modification is found at S15. Positions 43 and 76 each coordinate AMP. Y204 and Y227 each carry phosphotyrosine. R310–C319 contributes to the AMP binding site. S430 carries the phosphoserine modification. Y473 carries the phosphotyrosine modification. At S514 the chain carries Phosphoserine. K681 carries the N6-(pyridoxal phosphate)lysine modification. A phosphoserine mark is found at S747 and S748.

The protein belongs to the glycogen phosphorylase family. As to quaternary structure, homodimer. Homotetramer; to form the enzymatically active phosphorylase A. Pyridoxal 5'-phosphate serves as cofactor. Post-translationally, phosphorylation of Ser-15 converts phosphorylase B (unphosphorylated) to phosphorylase A.

The catalysed reaction is [(1-&gt;4)-alpha-D-glucosyl](n) + phosphate = [(1-&gt;4)-alpha-D-glucosyl](n-1) + alpha-D-glucose 1-phosphate. Its activity is regulated as follows. Allosterically regulated through the non-covalent binding of metabolites, being activated by AMP and inhibited by ATP, ADP, and glucose-6-phosphate. The activity is also controlled by post-translational modifications including phosphorylation. In terms of biological role, allosteric enzyme that catalyzes the rate-limiting step in glycogen catabolism, the phosphorolytic cleavage of glycogen to produce glucose-1-phosphate, and plays a central role in maintaining cellular and organismal glucose homeostasis. The polypeptide is Glycogen phosphorylase, muscle form (Homo sapiens (Human)).